Here is a 509-residue protein sequence, read N- to C-terminus: Sulfoacetate--CoA ligase (509 aa).

The tract at residues 320 to 340 (AFSNPLDPGQRRIGSIGRPSG) is disordered.

This sequence belongs to the ATP-dependent AMP-binding enzyme family.

It is found in the cytoplasm. It catalyses the reaction sulfoacetate + ATP + CoA = sulfoacetyl-CoA + AMP + diphosphate. In terms of biological role, involved in the degradation of sulfoacetate, a widespread natural product. Catalyzes the CoA- and ATP-dependent conversion of sulfoacetate to sulfoacetyl-CoA and AMP. The polypeptide is Sulfoacetate--CoA ligase (Cupriavidus necator (strain ATCC 17699 / DSM 428 / KCTC 22496 / NCIMB 10442 / H16 / Stanier 337) (Ralstonia eutropha)).